Reading from the N-terminus, the 170-residue chain is Histone H1.9 (170 aa).

One can recognise an H15 domain in the interval 34–108; sequence RKPTMSYVIL…GASGSLCLCK (75 aa). Phosphoserine is present on S56. The disordered stretch occupies residues 118 to 140; sequence AKRCQDRQKSQKPQKPGQRESEP.

It belongs to the histone H1/H5 family. Expressed exclusively in the testis by haploid germ cells (at protein level).

It localises to the nucleus. It is found in the chromosome. Its function is as follows. DNA-binding protein that may be implicated in chromatin remodeling and/or transcriptional regulation during spermiogenesis, the process of spermatid maturation into spermatozoa. The protein is Histone H1.9 of Mus musculus (Mouse).